Here is a 156-residue protein sequence, read N- to C-terminus: Arginine repressor (156 aa).

This sequence belongs to the ArgR family.

The protein localises to the cytoplasm. The protein operates within amino-acid biosynthesis; L-arginine biosynthesis [regulation]. In terms of biological role, regulates arginine biosynthesis genes. This chain is Arginine repressor, found in Klebsiella pneumoniae (strain 342).